The following is a 639-amino-acid chain: MTDLPVDEPDRDDGADQPDAGADPATPRGVEAIRAALRTMPSSPGVYRMIDGKGDVLYVGKARNLKRRVINYTQPHRLPVRIQRMIAATLTMEVLTTHTEAEALLLESNLIKKLKPRYNILLRDDKSFPYIEITSDHAFPRIVKFRGTLRKGGEYFGPFASAGAVTSTLTALQKTFLLRTCADNVFASRSRPCLLFQIKRCAAPCVDRVAEADYKALVEEARAFLSGSSKALQHDLAKRMDEAAQALDYEQAAIFRDRIKALTNVQSHQDINLPTLGEADVIACHQAGGQTCVQVFFFRGGRNNGNRSFFPAHAGDEGLPEVLEAFLGQFYAGFPPPREILLLTDIPHHDLVEQALCLRAGHRVRLVVPRRGSRRKLIDHALANAREALGRRLAESSAQRTLLEGTAVAFGLDGPLQRVEIYDNSHISGTHAVGGMVVAGPEGFMKAAYRKFNIRSPDITPGDDYAMMREVMIRRFARARKEDPDRDRGQWPDLVLIDGGLGQLNAVREALAEIGVEDVPLVGVAKGPDRDAGRERFFVPGRPPFMLRHNDPVLYFIQRLRDEAHRFAIGSHRTRRSKAIGVSPLDSVPGIGASRKKALLHHFGSAKAVSQAGLTDLEAVEGISAALAKKLYDHFHSEG.

Acidic residues predominate over residues 1–16 (MTDLPVDEPDRDDGAD). Residues 1 to 28 (MTDLPVDEPDRDDGADQPDAGADPATPR) are disordered. The span at 17–27 (QPDAGADPATP) shows a compositional bias: low complexity. The GIY-YIG domain maps to 42 to 120 (SSPGVYRMID…IKKLKPRYNI (79 aa)). Positions 230–265 (KALQHDLAKRMDEAAQALDYEQAAIFRDRIKALTNV) constitute a UVR domain.

It belongs to the UvrC family. As to quaternary structure, interacts with UvrB in an incision complex.

The protein resides in the cytoplasm. In terms of biological role, the UvrABC repair system catalyzes the recognition and processing of DNA lesions. UvrC both incises the 5' and 3' sides of the lesion. The N-terminal half is responsible for the 3' incision and the C-terminal half is responsible for the 5' incision. This Rhodospirillum rubrum (strain ATCC 11170 / ATH 1.1.1 / DSM 467 / LMG 4362 / NCIMB 8255 / S1) protein is UvrABC system protein C.